The primary structure comprises 220 residues: MAEYLASIFGTEKDKVNCSFYFKIGVCRHGDRCSRLHNKPTFSQTIVLLNLYRNPQNTAQTADGSHCHVSDVEVQEHYDSFFEEVFTELQEKYGEIEEMNVCDNLGDHLVGNVYVKFRREEDGERAVAELSNRWFNGQAVHGELSPVTDFRESCCRQYEMGECTRGGFCNFMHLRPISQNLQRQLYGRGPRRRSPPRFHTGHHPRERNHRCSPDHWHGRF.

Position 2 is an N-acetylalanine (Ala-2). Residues 12–40 (EKDKVNCSFYFKIGVCRHGDRCSRLHNKP) form a C3H1-type 1 zinc finger. The RRM domain maps to 65–147 (SHCHVSDVEV…QAVHGELSPV (83 aa)). The C3H1-type 2 zinc-finger motif lies at 149 to 176 (DFRESCCRQYEMGECTRGGFCNFMHLRP). Positions 185-220 (LYGRGPRRRSPPRFHTGHHPRERNHRCSPDHWHGRF) are disordered. Residues 189–208 (GPRRRSPPRFHTGHHPRERN) are compositionally biased toward basic residues. The segment covering 209-220 (HRCSPDHWHGRF) has biased composition (basic and acidic residues).

The protein belongs to the splicing factor SR family. In terms of assembly, interacts with GFI1, U2AF2 and C1QBP. Isoform 2 is widely expressed. Isoform 3 is highly expressed in heart, brain and lung, lower expressed in thymus and much lower expressed in peripheral blood leukocytes.

It is found in the nucleus. The protein resides in the nucleus speckle. The protein localises to the cytoplasm. Its function is as follows. RNA-binding protein that function as a pre-mRNA splicing factor. Plays a critical role in both constitutive and enhancer-dependent splicing by mediating protein-protein interactions and protein-RNA interactions required for accurate 3'-splice site selection. Acts by enhancing the binding of U2AF2 to weak pyrimidine tracts. Also participates in the regulation of alternative pre-mRNA splicing. Activates exon 5 skipping of PTPRC during T-cell activation; an event reversed by GFI1. Binds to RNA at the AG dinucleotide at the 3'-splice site. Shows a preference for AGC or AGA. In Homo sapiens (Human), this protein is Splicing factor U2AF 26 kDa subunit (U2AF1L4).